The chain runs to 127 residues: MAIVGLGTDIVKIERIEAHVARSGDKLARRVLTEAELAIYIAHSQPNRYLAKRFAAKEAAAKALGTGIGRGVSFQHIHIGNTPDGAPTIRFTDGAQQRLAFLNGVFGHISIADEKSYAIATVILESC.

Mg(2+) contacts are provided by Asp-9 and Glu-58.

It belongs to the P-Pant transferase superfamily. AcpS family. Mg(2+) is required as a cofactor.

It localises to the cytoplasm. It carries out the reaction apo-[ACP] + CoA = holo-[ACP] + adenosine 3',5'-bisphosphate + H(+). Transfers the 4'-phosphopantetheine moiety from coenzyme A to a Ser of acyl-carrier-protein. This Shewanella putrefaciens (strain CN-32 / ATCC BAA-453) protein is Holo-[acyl-carrier-protein] synthase.